The chain runs to 399 residues: Putative 3'-5' exonuclease R431 (399 aa).

One can recognise a 3'-5' exonuclease domain in the interval 118–297 (FQIVDNWIEN…IYNELQLMTN (180 aa)). The region spanning 335-399 (ERRLKSIESK…NKYVIITRHC (65 aa)) is the R3H domain.

The polypeptide is Putative 3'-5' exonuclease R431 (Acanthamoeba polyphaga (Amoeba)).